Consider the following 247-residue polypeptide: Chymase (247 aa).

The N-terminal stretch at 1-17 is a signal peptide; the sequence is MCLLSLPLLLFLQYTRA. The propeptide at 18 to 21 is activation peptide; that stretch reads KAGE. One can recognise a Peptidase S1 domain in the interval 22-245; sequence VIGGTECKPH…YRPWINKILK (224 aa). Cys-51 and Cys-67 are disulfide-bonded. His-66 serves as the catalytic Charge relay system. An N-linked (GlcNAc...) asparagine glycan is attached at Asn-103. Residue Asp-110 is the Charge relay system of the active site. An N-linked (GlcNAc...) asparagine glycan is attached at Asn-121. Disulfide bonds link Cys-144–Cys-209 and Cys-175–Cys-188. The Charge relay system role is filled by Ser-203.

Belongs to the peptidase S1 family. Granzyme subfamily.

It is found in the secreted. The protein localises to the cytoplasmic granule. The enzyme catalyses Preferential cleavage: Phe-|-Xaa &gt; Tyr-|-Xaa &gt; Trp-|-Xaa &gt; Leu-|-Xaa.. Functionally, major secreted protease of mast cells with suspected roles in vasoactive peptide generation, extracellular matrix degradation, and regulation of gland secretion. The protein is Chymase of Cavia porcellus (Guinea pig).